We begin with the raw amino-acid sequence, 442 residues long: MITPKVLSGFKDRLPKDAIQKAQLLAKVSVVFQSFGFVPIETPHLEYAEVLLPDASSDIQKEIYRFKDHGDRDVALRFDLTVPLARFVSLHHQILGMPFKRYAIGNVFRGERAQKGRYREFTQCDFDFIGSESLVCDAEIIQVIVASLKALDLEDFCVSINHRKILNGICEYFGVSQVNEALRIVDKLEKIGLNGVEEELKKECDLNSNTIKELLEMVQIKQDDLSHAEFFEKIAYLKDYNENLKKGIQDLERLYQLLGDLQISQNLYKIDFSIARGLGYYTGIVYETTLNEMKSLGSVCSGGRYDHLTKNFSKENLQGVGASIGIDRLIVALNEMQLLDERSTQAKVLIACMHEEYFSYANRLAESLRQSGIFSEVYPEAQKIKKPFSYANHKGHEFVAVIGEEEFKSETLSLKNMHSGMQLNCLSFLKALEIIGENDEDL.

Belongs to the class-II aminoacyl-tRNA synthetase family. Homodimer.

The protein resides in the cytoplasm. It carries out the reaction tRNA(His) + L-histidine + ATP = L-histidyl-tRNA(His) + AMP + diphosphate + H(+). The chain is Histidine--tRNA ligase from Helicobacter pylori (strain HPAG1).